The following is a 31-amino-acid chain: leu operon leader peptide (31 aa).

Its function is as follows. Involved in control of the biosynthesis of leucine. The polypeptide is leu operon leader peptide (leuL) (Buchnera aphidicola subsp. Rhopalosiphum padi).